The primary structure comprises 123 residues: Fluoride-specific ion channel FluC (123 aa).

4 consecutive transmembrane segments (helical) span residues 1–21 (MLEI…RYLM), 32–52 (ILSL…GLVI), 64–84 (IGLL…SFSY), and 99–119 (FGYT…GIYL). The Na(+) site is built by glycine 74 and threonine 77.

The protein belongs to the fluoride channel Fluc/FEX (TC 1.A.43) family.

The protein resides in the cell inner membrane. It catalyses the reaction fluoride(in) = fluoride(out). With respect to regulation, na(+) is not transported, but it plays an essential structural role and its presence is essential for fluoride channel function. Functionally, fluoride-specific ion channel. Important for reducing fluoride concentration in the cell, thus reducing its toxicity. The polypeptide is Fluoride-specific ion channel FluC (Gloeothece citriformis (strain PCC 7424) (Cyanothece sp. (strain PCC 7424))).